The chain runs to 187 residues: Large ribosomal subunit protein bL25 (187 aa).

This sequence belongs to the bacterial ribosomal protein bL25 family. CTC subfamily. Part of the 50S ribosomal subunit; part of the 5S rRNA/L5/L18/L25 subcomplex. Contacts the 5S rRNA. Binds to the 5S rRNA independently of L5 and L18.

This is one of the proteins that binds to the 5S RNA in the ribosome where it forms part of the central protuberance. In Tropheryma whipplei (strain TW08/27) (Whipple's bacillus), this protein is Large ribosomal subunit protein bL25.